The chain runs to 511 residues: L-arabinose isomerase (511 aa).

4 residues coordinate Mn(2+): Glu-316, Glu-343, His-360, and His-459.

The protein belongs to the arabinose isomerase family. Mn(2+) is required as a cofactor.

It catalyses the reaction beta-L-arabinopyranose = L-ribulose. The protein operates within carbohydrate degradation; L-arabinose degradation via L-ribulose; D-xylulose 5-phosphate from L-arabinose (bacterial route): step 1/3. In terms of biological role, catalyzes the conversion of L-arabinose to L-ribulose. The sequence is that of L-arabinose isomerase from Arthrobacter sp. (strain FB24).